The following is a 37-amino-acid chain: Kappa-actitoxin-Bgr1a (37 aa).

Positions 2–37 (CRDWFKETACRHAKSLGNCRTSQKYRANCAKTCELC) constitute a ShKT domain. 3 cysteine pairs are disulfide-bonded: C2–C37, C11–C30, and C20–C34. Residues 25 to 26 (KY) form a crucial for binding to potassium channels region.

This sequence belongs to the sea anemone type 1 potassium channel toxin family. Type 1b subfamily.

It localises to the secreted. Its subcellular location is the nematocyst. In terms of biological role, inhibits voltage-dependent potassium channels of the Kv1 family (Kv1.1/KCNA1 (Kd=6 nM), Kv1.2/KCNA2 (Kd=15 nM), Kv1.3/KCNA3 (Kd=10-39 nM), Kv1.6/KCNA6, and KCa3.1/KCNN4 (Kd=172 nM)). The polypeptide is Kappa-actitoxin-Bgr1a (Bunodosoma granuliferum (Red warty sea anemone)).